A 185-amino-acid polypeptide reads, in one-letter code: MKMIVGLGNPGQKYAGSKHNMGFMVVDGLAKRLNLTIDKLEFDAATATTRLNGEKIFLVKPQTFMNASGRAVRELMMFYQIQLDEIFVVQDDMDLTLGKLRLRKRGSAGGHNGIKDIISATGSDEFCRLKIGIQHPQRQRVVDWVLTPFSKTDQPLIDDAIEKADDALEDWLNGMPFDQLMNKFN.

Tyr14 contributes to the tRNA binding site. The active-site Proton acceptor is His19. Phe64, Asn66, and Asn112 together coordinate tRNA.

It belongs to the PTH family. As to quaternary structure, monomer.

It localises to the cytoplasm. It carries out the reaction an N-acyl-L-alpha-aminoacyl-tRNA + H2O = an N-acyl-L-amino acid + a tRNA + H(+). Hydrolyzes ribosome-free peptidyl-tRNAs (with 1 or more amino acids incorporated), which drop off the ribosome during protein synthesis, or as a result of ribosome stalling. In terms of biological role, catalyzes the release of premature peptidyl moieties from peptidyl-tRNA molecules trapped in stalled 50S ribosomal subunits, and thus maintains levels of free tRNAs and 50S ribosomes. This is Peptidyl-tRNA hydrolase from Lacticaseibacillus casei (strain BL23) (Lactobacillus casei).